A 440-amino-acid chain; its full sequence is Dynein axonemal assembly factor 11 (440 aa).

LRR repeat units follow at residues 20–43, 44–65, 66–89, and 90–110; these read IFSLEELSLHQQDIQRIEHIHKWC, RDLKILYLQNNLIPKIENVGRL, KKLEYLNLALNNIEVIENLEGCES, and LQKLDLTVNFVGRLSSVETLK. In terms of domain architecture, LRRCT spans 128 to 146; it reads YQGYRQYVVATVPQLQSLD. The span at 178–192 shows a compositional bias: basic and acidic residues; sequence EEREKQKSNANEHPE. Disordered stretches follow at residues 178–267 and 363–440; these read EERE…RTLI and PKKR…PPLM. The segment covering 193-211 has biased composition (polar residues); it reads INQSLSESQNGTQQYPESS. Basic and acidic residues predominate over residues 236–259; it reads SRLEAHRHLEEKRRANEKEKEKPK. In terms of domain architecture, CS spans 276-374; it reads VNEPKLDFSL…KRTIRPTSVT (99 aa). A compositionally biased stretch (polar residues) spans 369 to 378; the sequence is RPTSVTSNQN. Composition is skewed to basic and acidic residues over residues 379–392 and 420–431; these read NKKDTRAAPRRELL and GLEERPVSKDFV.

The protein belongs to the tilB family. As to quaternary structure, interacts with dvl2. Interacts with kur. As to expression, expressed in kinocilia of hair cells.

It is found in the cytoplasm. It localises to the dynein axonemal particle. Its subcellular location is the cell projection. The protein resides in the cilium. Its function is as follows. Plays a crucial role in regulating cilia motility in pronephric tubules, cloaca and neural tube. Required for establishing left-right asymmetry of the body plan; controls cell fate and convergent extension (CE) movements during gastrulation, respectively, via the Wnt and the planar cell polarity (PCP) signaling pathways. Required for the proper development of renal glomeruli and tubules. In Danio rerio (Zebrafish), this protein is Dynein axonemal assembly factor 11 (dnaaf11).